The following is a 293-amino-acid chain: Triosephosphate isomerase (293 aa).

25 to 27 (NWK) is a substrate binding site. The active-site Electrophile is the H117. The Proton acceptor role is filled by E218.

Belongs to the triosephosphate isomerase family. In terms of assembly, homodimer.

It localises to the cytoplasm. The enzyme catalyses D-glyceraldehyde 3-phosphate = dihydroxyacetone phosphate. It participates in carbohydrate biosynthesis; gluconeogenesis. Its pathway is carbohydrate degradation; glycolysis; D-glyceraldehyde 3-phosphate from glycerone phosphate: step 1/1. Functionally, involved in the gluconeogenesis. Catalyzes stereospecifically the conversion of dihydroxyacetone phosphate (DHAP) to D-glyceraldehyde-3-phosphate (G3P). The sequence is that of Triosephosphate isomerase from Tropheryma whipplei (strain TW08/27) (Whipple's bacillus).